A 273-amino-acid chain; its full sequence is Formamidopyrimidine-DNA glycosylase (273 aa).

Pro2 serves as the catalytic Schiff-base intermediate with DNA. The Proton donor role is filled by Glu3. Residue Lys59 is the Proton donor; for beta-elimination activity of the active site. His93, Arg111, and Arg154 together coordinate DNA. The segment at 239–273 (KVYGRGGEPCKECGHTLVRIRLAGRSTVFCPCCQV) adopts an FPG-type zinc-finger fold. Arg263 serves as the catalytic Proton donor; for delta-elimination activity.

Belongs to the FPG family. In terms of assembly, monomer. It depends on Zn(2+) as a cofactor.

It catalyses the reaction Hydrolysis of DNA containing ring-opened 7-methylguanine residues, releasing 2,6-diamino-4-hydroxy-5-(N-methyl)formamidopyrimidine.. It carries out the reaction 2'-deoxyribonucleotide-(2'-deoxyribose 5'-phosphate)-2'-deoxyribonucleotide-DNA = a 3'-end 2'-deoxyribonucleotide-(2,3-dehydro-2,3-deoxyribose 5'-phosphate)-DNA + a 5'-end 5'-phospho-2'-deoxyribonucleoside-DNA + H(+). In terms of biological role, involved in base excision repair of DNA damaged by oxidation or by mutagenic agents. Acts as a DNA glycosylase that recognizes and removes damaged bases. Has a preference for oxidized purines, such as 7,8-dihydro-8-oxoguanine (8-oxoG). Has AP (apurinic/apyrimidinic) lyase activity and introduces nicks in the DNA strand. Cleaves the DNA backbone by beta-delta elimination to generate a single-strand break at the site of the removed base with both 3'- and 5'-phosphates. This chain is Formamidopyrimidine-DNA glycosylase, found in Desulfitobacterium hafniense (strain DSM 10664 / DCB-2).